Here is a 389-residue protein sequence, read N- to C-terminus: Alkanesulfonate monooxygenase (389 aa).

It belongs to the SsuD family.

It catalyses the reaction an alkanesulfonate + FMNH2 + O2 = an aldehyde + FMN + sulfite + H2O + 2 H(+). Functionally, catalyzes the desulfonation of aliphatic sulfonates. This Variovorax paradoxus (strain S110) protein is Alkanesulfonate monooxygenase.